We begin with the raw amino-acid sequence, 148 residues long: MFRRPVLQVLRQFVRHESETASSLVLERSLNRVHLLGRVGQDPVLRQVEGKNPVTIFSLATNEMWRSGDSEVYQLGDISQKTTWHRISVFRPGLRDVAYQYVKKGSRIYLEGKIDYGEYMDKNNVRRQATTIIADNIIFLSDQTKEKE.

A mitochondrion-targeting transit peptide spans 1-16 (MFRRPVLQVLRQFVRH). The SSB domain occupies 30–141 (LNRVHLLGRV…IIADNIIFLS (112 aa)). Phosphoserine occurs at positions 67 and 79. Lys-113 is modified (N6-acetyllysine). An N6-succinyllysine modification is found at Lys-122.

As to quaternary structure, homotetramer. Interacts with MPG/AAG, through inhibition of its glycosylase activity it potentially prevents formation of DNA breaks in ssDNA, ensuring that base removal primarily occurs in dsDNA. Interacts with POLDIP2. Interacts with PRIMPOL.

It localises to the mitochondrion. Its subcellular location is the mitochondrion matrix. The protein resides in the mitochondrion nucleoid. Functionally, binds preferentially and cooperatively to pyrimidine rich single-stranded DNA (ss-DNA). In vitro, required to maintain the copy number of mitochondrial DNA (mtDNA) and plays a crucial role during mtDNA replication by stimulating the activity of the replisome components POLG and TWNK at the replication fork. Promotes the activity of the gamma complex polymerase POLG, largely by organizing the template DNA and eliminating secondary structures to favor ss-DNA conformations that facilitate POLG activity. In addition it is able to promote the 5'-3' unwinding activity of the mtDNA helicase TWNK. May also function in mtDNA repair. This chain is Single-stranded DNA-binding protein, mitochondrial (SSBP1), found in Pongo abelii (Sumatran orangutan).